Reading from the N-terminus, the 227-residue chain is PKHD-type hydroxylase NE2125 (227 aa).

The 102-residue stretch at 78 to 179 folds into the Fe2OG dioxygenase domain; the sequence is KIVPPFFNRY…RLACFMFIQS (102 aa). Positions 97, 99, and 160 each coordinate Fe cation. Arg-170 provides a ligand contact to 2-oxoglutarate.

Requires Fe(2+) as cofactor. It depends on L-ascorbate as a cofactor.

The chain is PKHD-type hydroxylase NE2125 from Nitrosomonas europaea (strain ATCC 19718 / CIP 103999 / KCTC 2705 / NBRC 14298).